The chain runs to 320 residues: MEAFLLENRKPQITTLASGKTLKPATHRLNLPAYTKLIHELRTKTHAKVAISLSTDSQIHMVWVKSGLVFFTPSASHPAYVNFASSNRLTDVPALTKTTFPQSDVKLIETTPLPNDETSHVASFQLVTWMEGALNILNDLSKCAISFINQCEDTFKSGTNLNKELYNRCITAESRDFCNQMKFVLIGRLCYGQTTSPPPIQLYQYGVTPFISSDIICEGAAYRPIDVENYAMNSNHTVSYAPFFVPNETKPGSRIDLIMVNHLKKFNLMFDSWYKTGGSVMVSSRPERTQNEASVSQIMPTSVKHIANEDLTADDGEGSE.

In Lymantria dispar (Gypsy moth), this protein is Non-structural protein 5 (S9).